Reading from the N-terminus, the 197-residue chain is uncharacterized protein (197 aa).

Positions 1–23 (MSARAPKELRLALPPCLLNRTFA) are cleaved as a signal peptide. Residues Asn19 and Asn26 are each glycosylated (N-linked (GlcNAc...) asparagine). The Extracellular segment spans residues 24 to 61 (SPNASGSGNTGARGPGAGGSGTCITQVGQQLFQSFSST). A helical transmembrane segment spans residues 62–82 (LVLIVLVTLIFCLIVLSLSTF). At 83–197 (HIHKRRMKKR…EGLLQTVVLS (115 aa)) the chain is on the cytoplasmic side. The segment at 94 to 179 (MQRAQEEYER…ASSPQGAHAV (86 aa)) is disordered. Basic and acidic residues-rich tracts occupy residues 96–107 (RAQEEYERDHCS) and 125–136 (HAKETRLERQPR). Over residues 147-161 (SSSSSSSPGLPCQGP) the composition is skewed to low complexity. Residues 162 to 171 (CAPPPPPPAS) show a composition bias toward pro residues.

It localises to the membrane. This is an uncharacterized protein from Pongo abelii (Sumatran orangutan).